A 99-amino-acid chain; its full sequence is Transmembrane protein 14A (99 aa).

3 helical membrane-spanning segments follow: residues 1–21 (MDLI…FGYK), 24–44 (GGVP…YGAY), and 79–99 (PAGL…LLLL).

This sequence belongs to the TMEM14 family. As to expression, expressed at significantly higher levels in ovarian cancer tissues than in normal tissues (at protein level).

Its subcellular location is the mitochondrion membrane. It is found in the endoplasmic reticulum membrane. In terms of biological role, inhibits apoptosis via negative regulation of the mitochondrial outer membrane permeabilization involved in apoptotic signaling pathway. The chain is Transmembrane protein 14A (TMEM14A) from Homo sapiens (Human).